We begin with the raw amino-acid sequence, 284 residues long: Efem/EfeO family lipoprotein (284 aa).

Positions 1-17 are cleaved as a signal peptide; that stretch reads MKKLTTLLLASTLLIAA. Cysteine 18 carries N-palmitoyl cysteine lipidation. Cysteine 18 carries the S-diacylglycerol cysteine lipid modification.

It belongs to the EfeM/EfeO family.

It localises to the cell membrane. The sequence is that of Efem/EfeO family lipoprotein from Staphylococcus aureus (strain MRSA252).